Reading from the N-terminus, the 206-residue chain is Large ribosomal subunit protein uL4 (206 aa).

The interval 49–73 is disordered; the sequence is KTKTISEISGTTKKPFAQKGGGRAR.

It belongs to the universal ribosomal protein uL4 family. In terms of assembly, part of the 50S ribosomal subunit.

Its function is as follows. One of the primary rRNA binding proteins, this protein initially binds near the 5'-end of the 23S rRNA. It is important during the early stages of 50S assembly. It makes multiple contacts with different domains of the 23S rRNA in the assembled 50S subunit and ribosome. In terms of biological role, forms part of the polypeptide exit tunnel. The protein is Large ribosomal subunit protein uL4 of Paramagnetospirillum magneticum (strain ATCC 700264 / AMB-1) (Magnetospirillum magneticum).